A 261-amino-acid polypeptide reads, in one-letter code: Pimeloyl-[acyl-carrier protein] methyl ester esterase (261 aa).

An AB hydrolase-1 domain is found at 16–241 (LVLIHGWGMN…QASHAPFISH (226 aa)). Substrate contacts are provided by residues W22, 82-83 (SL), and 143-147 (FMTLQ). S82 (nucleophile) is an active-site residue. Residues D207 and H235 contribute to the active site. H235 is a substrate binding site.

The protein belongs to the AB hydrolase superfamily. Carboxylesterase BioH family. Monomer.

The protein localises to the cytoplasm. It catalyses the reaction 6-carboxyhexanoyl-[ACP] methyl ester + H2O = 6-carboxyhexanoyl-[ACP] + methanol + H(+). Its pathway is cofactor biosynthesis; biotin biosynthesis. Functionally, the physiological role of BioH is to remove the methyl group introduced by BioC when the pimeloyl moiety is complete. It allows to synthesize pimeloyl-ACP via the fatty acid synthetic pathway through the hydrolysis of the ester bonds of pimeloyl-ACP esters. In Aliivibrio salmonicida (strain LFI1238) (Vibrio salmonicida (strain LFI1238)), this protein is Pimeloyl-[acyl-carrier protein] methyl ester esterase.